We begin with the raw amino-acid sequence, 261 residues long: Gap junction beta-6 protein (261 aa).

Over 1–22 (MDWGTLHTFVGGVNKHSTSIGK) the chain is Cytoplasmic. A helical transmembrane segment spans residues 23 to 45 (VWVTVLFVFRVMILVVAAQEVWG). The Extracellular portion of the chain corresponds to 46 to 75 (DEQEDFVCNTLQPGCRNVCYDHFFPVSHIR). The chain crosses the membrane as a helical span at residues 76-98 (LWALQLIFVSTPALLVAMHVAYY). The Cytoplasmic portion of the chain corresponds to 99 to 131 (RHEAARRFRRGETRSEFKDLEDIKRQKVRIEGS). A helical membrane pass occupies residues 132–154 (LWWTYTSSIFFRIVFEAAFMYVF). Topologically, residues 155–192 (YFLYNGYHLPWVLKCGIQPCPNLVDCFISRPTEKTVFT) are extracellular. The chain crosses the membrane as a helical span at residues 193-215 (IFMISASVICMLLNVAELCYLLL). Topologically, residues 216–261 (KVCFRRSKRAQTQKAPPNHALKESKQNEMNELISEGGQNAITGFPS) are cytoplasmic.

Belongs to the connexin family. Beta-type (group I) subfamily. A connexon is composed of a hexamer of connexins. Interacts with CNST.

It localises to the cell membrane. Its subcellular location is the cell junction. The protein localises to the gap junction. In terms of biological role, one gap junction consists of a cluster of closely packed pairs of transmembrane channels, the connexons, through which materials of low MW diffuse from one cell to a neighboring cell. This chain is Gap junction beta-6 protein (GJB6), found in Bos taurus (Bovine).